The primary structure comprises 491 residues: Serine/threonine-protein kinase 3 (491 aa).

M1 carries the N-acetylmethionine modification. S15 bears the Phosphoserine mark. A Protein kinase domain is found at 27–278 (FDVLEKLGEG…ATQLLQHPFI (252 aa)). ATP is bound by residues 33 to 41 (LGEGSYGSV) and K56. At T117 the chain carries Phosphothreonine; by PKB/AKT1. D146 acts as the Proton acceptor in catalysis. The Mg(2+) site is built by N151 and D164. Residue T180 is modified to Phosphothreonine; by autocatalysis. A coiled-coil region spans residues 291–324 (ITEGMEIKAKRHEEQQRELEDEEENSDEDELDSH). 2 disordered regions span residues 301 to 343 (RHEE…TSTM) and 370 to 392 (EDEE…QRPS). The segment covering 309–321 (LEDEEENSDEDEL) has biased composition (acidic residues). S316 is modified (phosphoserine). A compositionally biased stretch (polar residues) spans 326–343 (MVKTSSEGVGTMRATSTM). A phosphothreonine mark is found at T336 and T378. Positions 381-390 (RNATSPQVQR) are enriched in polar residues. The residue at position 384 (T384) is a Phosphothreonine; by PKB/AKT1. Residues S385 and S444 each carry the phosphoserine modification. The 48-residue stretch at 437-484 (FDFLKNLSLEELQMRLKALDPMMEREIEELHQRYSAKRQPILDAMDAK) folds into the SARAH domain.

The protein belongs to the protein kinase superfamily. STE Ser/Thr protein kinase family. STE20 subfamily. Homodimer; mediated via the coiled-coil region. Interacts with NORE1, which inhibits autoactivation. Interacts with and stabilizes SAV1. Interacts with RAF1, which prevents dimerization and phosphorylation. Interacts with RASSF1. Interacts (via SARAH domain) with isoform 1 of NEK2. Interacts with ESR1 only in the presence of SAV1. Interacts with PKB/AKT1. Forms a tripartite complex with MOBKL1B and STK38. Interacts with RASSF2 (via SARAH domain). Interacts with DLG5 (via PDZ domain 3). Interacts with LATS1; this interaction is inhibited in the presence of DLG5. Interacts with MARK3 in the presence of DLG5. Interacts with RASSF5; this interaction inhibits STK3 autoactivation through heterodimerization. Interacts (when phosphorylated) with SLMAP (via FHA domain); the interaction associates STK3 with the STRIPAK complex. Mg(2+) is required as a cofactor. Post-translationally, autophosphorylated on two residues Thr-174 and Thr-180, leading to activation. Phosphorylation at Thr-117 and Thr-384 by PKB/AKT1, leads to inhibition of its: cleavage, kinase activity, autophosphorylation at Thr-180, binding to RASSF1 and nuclear translocation, and increase in its binding to RAF1. Phosphorylated at Ser-15 by PLK1, leading to activation. Proteolytically cleaved by caspase-3 during apoptosis. Proteolytic cleavage results in kinase activation and nuclear translocation of the truncated form (MST1/N). In terms of processing, ubiquitinated by TRIM69; leading to its redistribution to the perinuclear cytoskeleton.

It localises to the cytoplasm. The protein resides in the nucleus. It carries out the reaction L-seryl-[protein] + ATP = O-phospho-L-seryl-[protein] + ADP + H(+). The catalysed reaction is L-threonyl-[protein] + ATP = O-phospho-L-threonyl-[protein] + ADP + H(+). Inhibited by the C-terminal non-catalytic region. Activated by caspase-cleavage. Full activation also requires homodimerization and autophosphorylation of Thr-180, which are inhibited by the proto-oncogene product RAF1. Activated by RASSF1 which acts by preventing its dephosphorylation. When autophosphorylated at Thr-180, recruits STRIPAK complex and promotes PP2A-mediated dephosphorylation and inactivation of STK3. In terms of biological role, stress-activated, pro-apoptotic kinase which, following caspase-cleavage, enters the nucleus and induces chromatin condensation followed by internucleosomal DNA fragmentation. Key component of the Hippo signaling pathway which plays a pivotal role in organ size control and tumor suppression by restricting proliferation and promoting apoptosis. The core of this pathway is composed of a kinase cascade wherein STK3/MST2 and STK4/MST1, in complex with its regulatory protein SAV1, phosphorylates and activates LATS1/2 in complex with its regulatory protein MOB1, which in turn phosphorylates and inactivates YAP1 oncoprotein and WWTR1/TAZ. Phosphorylation of YAP1 by LATS2 inhibits its translocation into the nucleus to regulate cellular genes important for cell proliferation, cell death, and cell migration. STK3/MST2 and STK4/MST1 are required to repress proliferation of mature hepatocytes, to prevent activation of facultative adult liver stem cells (oval cells), and to inhibit tumor formation. Phosphorylates NKX2-1. Phosphorylates NEK2 and plays a role in centrosome disjunction by regulating the localization of NEK2 to centrosomes, and its ability to phosphorylate CROCC and CEP250. In conjunction with SAV1, activates the transcriptional activity of ESR1 through the modulation of its phosphorylation. Positively regulates RAF1 activation via suppression of the inhibitory phosphorylation of RAF1 on 'Ser-259'. Phosphorylates MOBKL1A and RASSF2. Phosphorylates MOBKL1B on 'Thr-74'. Acts cooperatively with MOBKL1B to activate STK38. The protein is Serine/threonine-protein kinase 3 (Stk3) of Rattus norvegicus (Rat).